Here is an 871-residue protein sequence, read N- to C-terminus: MMPPPFMPPPGIPPPFPPMGLPPMSQRPPAIPPMPPGILPPMLPPMGAPPPLTQIPGMVPPMMPGMLMPAVPVTAATAPGADTASSAVAGTGPPRALWSEHVAPDGRIYYYNADDKQSVWEKPSVLKSKAELLLSQCPWKEYKSDTGKPYYYNNQSKESRWTRPKDLDDLEVLVKQEAAGKQQQQLPQTLQPQPPQPQPDPPPVPPGPTPVPTGLLEPEPGGSEDCDVLEATQPLEQGFLQQLEEGPSSSGQHQPQQEEEESKPEPERSGLSWSNREKAKQAFKELLRDKAVPSNASWEQAMKMVVTDPRYSALPKLSEKKQAFNAYKAQREKEEKEEARLRAKEAKQTLQHFLEQHERMTSTTRYRRAEQTFGELEVWAVVPERDRKEVYDDVLFFLAKKEKEQAKQLRRRNIQALKSILDGMSSVNFQTTWSQAQQYLMDNPSFAQDHQLQNMDKEDALICFEEHIRALEREEEEERERARLRERRQQRKNREAFQTFLDELHETGQLHSMSTWMELYPAVSTDVRFANMLGQPGSTPLDLFKFYVEELKARFHDEKKIIKDILKDRGFCVEVNTAFEDFAHVISFDKRAAALDAGNIKLTFNSLLEKAEAREREREKEEARRMRRREAAFRSMLRQAVPALELGTAWEEVRERFVCDSAFEQITLESERIRLFREFLQVLEQTECQHLHTKGRKHGRKGKKHHHKRSHSPSGSESEEEELPPPSLRPPKRRRRNPSESGSEPSSSLDSVESGGAALGGRGSPSSHLLGADHGLRKAKKPKKKTKKRRHKSNSPESETDPEEKAGKESDEKEQEQDKDRELQQAELPNRSPGFGIKKEKTGWDTSESELSEGELERRRRTLLQQLDDHQ.

WW domains follow at residues 92–125 (GPPR…KPSV) and 133–166 (LLSQ…RPKD). Position 148 is an N6-acetyllysine (Lys-148). Residues 171–277 (EVLVKQEAAG…RSGLSWSNRE (107 aa)) form a disordered region. Lys-175 participates in a covalent cross-link: Glycyl lysine isopeptide (Lys-Gly) (interchain with G-Cter in SUMO2). Over residues 182-191 (QQQQLPQTLQ) the composition is skewed to low complexity. The span at 192-211 (PQPPQPQPDPPPVPPGPTPV) shows a compositional bias: pro residues. Low complexity-rich tracts occupy residues 212–221 (PTGLLEPEPG) and 245–255 (EGPSSSGQHQP). FF domains follow at residues 276–330 (REKA…YKAQ), 340–397 (RLRA…VLFF), 410–470 (RRRN…HIRA), 490–550 (QRKN…YVEE), 554–610 (RFHD…LLEK), and 625–682 (RMRR…FLQV). The disordered stretch occupies residues 690–871 (HLHTKGRKHG…TLLQQLDDHQ (182 aa)). Basic residues predominate over residues 691 to 711 (LHTKGRKHGRKGKKHHHKRSH). Residues 739–756 (SESGSEPSSSLDSVESGG) show a composition bias toward low complexity. Phosphoserine is present on Ser-764. A compositionally biased stretch (basic residues) spans 777–793 (RKAKKPKKKTKKRRHKS). The span at 803-824 (EEKAGKESDEKEQEQDKDRELQ) shows a compositional bias: basic and acidic residues. Residue Ser-832 is modified to Phosphoserine. A Glycyl lysine isopeptide (Lys-Gly) (interchain with G-Cter in SUMO2) cross-link involves residue Lys-838. Residue Ser-852 is modified to Phosphoserine.

This sequence belongs to the PRPF40 family. As to quaternary structure, interacts with the N-terminus of HD. Expressed in the striatum and cortex of the brain (at protein level). Highly expressed in testis, fetal kidney and fetal brain. Moderately expressed in pancreas, skeletal muscle, placenta, brain and heart. Weakly expressed in colon, ileum, ovary, prostate, spleen, kidney and fetal lung.

The protein resides in the nucleus speckle. Its function is as follows. May be involved in pre-mRNA splicing. The sequence is that of Pre-mRNA-processing factor 40 homolog B (PRPF40B) from Homo sapiens (Human).